The primary structure comprises 59 residues: MSDVNAHLLAQRIDTVLDILVAGDYHSAIHNLEILKAELLALAADDAEQQNQPKAPWEI.

It belongs to the UPF0509 family.

In Klebsiella pneumoniae subsp. pneumoniae (strain ATCC 700721 / MGH 78578), this protein is UPF0509 protein KPN78578_12530.